A 144-amino-acid polypeptide reads, in one-letter code: Large ribosomal subunit protein uL13 (144 aa).

It belongs to the universal ribosomal protein uL13 family. In terms of assembly, part of the 50S ribosomal subunit.

This protein is one of the early assembly proteins of the 50S ribosomal subunit, although it is not seen to bind rRNA by itself. It is important during the early stages of 50S assembly. This chain is Large ribosomal subunit protein uL13, found in Clostridium perfringens (strain 13 / Type A).